Here is a 707-residue protein sequence, read N- to C-terminus: Leucine-rich repeat neuronal protein 3 (707 aa).

An N-terminal signal peptide occupies residues 1-22 (MKDTPLQVHVLLGLAITTLVQA). The region spanning 23–69 (IDKKVDCPQLCTCEIRPWFTPRSIYMEASTVDCNDLGLLNFPARLPA) is the LRRNT domain. The Extracellular segment spans residues 23–626 (IDKKVDCPQL…DGKEYGKNHT (604 aa)). 12 LRR repeats span residues 70 to 91 (DTQI…TDFP), 93 to 114 (NLTG…NVQK), 117 to 138 (QLLS…CLYG), 141 to 162 (NLQE…AFIG), 165 to 186 (NLLR…WFDA), 189 to 210 (NLEI…NFQP), 213 to 234 (KLRS…ALAG), 237 to 258 (NLES…ALQK), 261 to 282 (NLKF…DFSN), 285 to 304 (HLKE…DSLA), 310 to 332 (DLRK…AFFR), and 335 to 358 (KLES…ESLP). Residues Asn93 and Asn103 are each glycosylated (N-linked (GlcNAc...) asparagine). N-linked (GlcNAc...) asparagine glycosylation occurs at Asn223. Residues 368 to 421 (NPIRCDCVIRWINMNKTNIRFMEPDSLFCVDPPEFQGQNVRQVHFRDMMEICLP) enclose the LRRCT domain. Asn382 is a glycosylation site (N-linked (GlcNAc...) asparagine). The 94-residue stretch at 421–514 (PLIAPESFPS…DLKSIMIKVG (94 aa)) folds into the Ig-like C2-type domain. Cysteines 444 and 496 form a disulfide. Residues Asn522, Asn579, Asn608, and Asn624 are each glycosylated (N-linked (GlcNAc...) asparagine). The Fibronectin type-III domain occupies 523-614 (GSLNIKIRDI…QCVNVTTKSL (92 aa)). The helical transmembrane segment at 627–647 (VFVACVGGLLGIIGVMCLFSC) threads the bilayer. At 648–707 (VSQEGSSEGEHSYAVNHCHKPALAFSELYPPLINLWESSKEKRATLEVKATAIGVPTNMS) the chain is on the cytoplasmic side.

In terms of tissue distribution, expressed in the brain, in Stronger expression in the ventricular zone and anlage of thalamus, spinal cord, and dorsal root ganglion in 11-17 dpc cerebellum and cerebral cortex in adults.

The protein localises to the membrane. The protein is Leucine-rich repeat neuronal protein 3 (Lrrn3) of Mus musculus (Mouse).